The sequence spans 300 residues: N-acetylmuramic acid 6-phosphate etherase (300 aa).

One can recognise an SIS domain in the interval Ile57–Lys220. The active-site Proton donor is the Glu85. Glu116 is a catalytic residue.

It belongs to the GCKR-like family. MurNAc-6-P etherase subfamily. Homodimer.

It catalyses the reaction N-acetyl-D-muramate 6-phosphate + H2O = N-acetyl-D-glucosamine 6-phosphate + (R)-lactate. It participates in amino-sugar metabolism; 1,6-anhydro-N-acetylmuramate degradation. It functions in the pathway amino-sugar metabolism; N-acetylmuramate degradation. Its pathway is cell wall biogenesis; peptidoglycan recycling. Functionally, specifically catalyzes the cleavage of the D-lactyl ether substituent of MurNAc 6-phosphate, producing GlcNAc 6-phosphate and D-lactate. Together with AnmK, is also required for the utilization of anhydro-N-acetylmuramic acid (anhMurNAc) either imported from the medium or derived from its own cell wall murein, and thus plays a role in cell wall recycling. The protein is N-acetylmuramic acid 6-phosphate etherase of Aliivibrio fischeri (strain MJ11) (Vibrio fischeri).